The sequence spans 55 residues: Large ribosomal subunit protein bL33 (55 aa).

It belongs to the bacterial ribosomal protein bL33 family.

This is Large ribosomal subunit protein bL33 from Cereibacter sphaeroides (strain ATCC 17029 / ATH 2.4.9) (Rhodobacter sphaeroides).